Consider the following 199-residue polypeptide: NADH-quinone oxidoreductase subunit C (199 aa).

The protein belongs to the complex I 30 kDa subunit family. In terms of assembly, NDH-1 is composed of 14 different subunits. Subunits NuoB, C, D, E, F, and G constitute the peripheral sector of the complex.

It localises to the cell inner membrane. It carries out the reaction a quinone + NADH + 5 H(+)(in) = a quinol + NAD(+) + 4 H(+)(out). Functionally, NDH-1 shuttles electrons from NADH, via FMN and iron-sulfur (Fe-S) centers, to quinones in the respiratory chain. The immediate electron acceptor for the enzyme in this species is believed to be ubiquinone. Couples the redox reaction to proton translocation (for every two electrons transferred, four hydrogen ions are translocated across the cytoplasmic membrane), and thus conserves the redox energy in a proton gradient. In Polynucleobacter necessarius subsp. necessarius (strain STIR1), this protein is NADH-quinone oxidoreductase subunit C.